We begin with the raw amino-acid sequence, 448 residues long: Asparagine--tRNA ligase (448 aa).

It belongs to the class-II aminoacyl-tRNA synthetase family. As to quaternary structure, homodimer.

It localises to the cytoplasm. The enzyme catalyses tRNA(Asn) + L-asparagine + ATP = L-asparaginyl-tRNA(Asn) + AMP + diphosphate + H(+). The chain is Asparagine--tRNA ligase from Streptococcus pyogenes serotype M4 (strain MGAS10750).